A 603-amino-acid polypeptide reads, in one-letter code: MALSFFSGGGSASHAKYFDIRLDEDYIVFRGGEQEAASAHLSGKLLLCLSEPLSIKHIRLHLTGISRVCWHLPSSSAGGGRKSWRERVIYEKTWRFRDPGKGKTEILPAGNYEYPFNLVLEGNMPESIEGLSDTYITYRFKAEIGRKYAKDIIVRKPLRIIRTLEPSALELAHAMSVENIWPNKIEYSISTPTKAVIFGTSIRVDFKLIPLLKGLTIGQIVSQLIESHDLTLNPEDPDSIRNTYKNTRTILNDEFELDHDNALEIIDEAAEGYQFSRYLDLPKTLTRCLQDTDTKGIKVRHKLKFRVQLMNPDGHISELRATLPVSIFISPNLAIDENNNLVDQTPQSAQRAINDIAQQAPPLYGEHQFDQLYSELDPNGYRTPGPGSGPGTPFGTLSRNLSAENLASMNALTNTDISASALHSRLSNLSNLNITRPHQPSPTDHESQNDSEHRRLGVPADYFGPSSGSNSHSPSSPVLSRRPSDEVDHEHVPSGMATPFHPQYAEVETLSRVPSYSTAVRTTVRPHDSDLPDYDAVVAEDIPVPPPLQSPQQAHIRNAGRGSSQLFSSLDILHHRPGLGHSHSSSHDDEDRRLRLVQARARV.

2 disordered regions span residues glutamate 375–serine 398 and leucine 432–proline 499. Residues threonine 443–arginine 455 are compositionally biased toward basic and acidic residues. Residues proline 465 to arginine 481 are compositionally biased toward low complexity. Residues arginine 482 to valine 492 show a composition bias toward basic and acidic residues.

Belongs to the arrestin family. In terms of assembly, interacts with hulA.

Functionally, component of the regulatory network controlling carbon source utilization through ubiquitination and deubiquitination involving creA, creB, creC, creD and acrB. May be involved in signaling by recognizing appropriately phosphorylated substrates via its arrestin domains and then recruit a HECT-type ubiquitin ligase such as hulA, leading to ubiquitination of the substrate, providing a link between ubiquitination and phosphorylation in protein regulation and stability. The protein is Probable HECT-type ubiquitin ligase-interacting protein creD (creD) of Aspergillus flavus (strain ATCC 200026 / FGSC A1120 / IAM 13836 / NRRL 3357 / JCM 12722 / SRRC 167).